Here is a 560-residue protein sequence, read N- to C-terminus: Solute carrier family 49 member A3 (560 aa).

12 helical membrane-spanning segments follow: residues 30 to 50 (WVFL…WLSF), 70 to 90 (WLSL…IWIL), 100 to 120 (ILGA…CMVV), 125 to 145 (PFAF…LVIF), 166 to 186 (LATM…PVLV), 192 to 212 (IPLM…LSTI), 250 to 270 (VILA…SALL), 282 to 302 (GFSG…ALAL), 318 to 338 (IGLC…QLQG), 341 to 361 (LALA…GPVA), 379 to 399 (GMIF…MTAL), and 422 to 442 (VSLL…AVFF). The disordered stretch occupies residues 451-540 (AESGEPPSTR…PGRLAGRVQA (90 aa)). Residues 466–481 (ADSGPGVDRGGAGRAG) show a composition bias toward gly residues.

Belongs to the major facilitator superfamily.

The protein resides in the membrane. The protein is Solute carrier family 49 member A3 of Homo sapiens (Human).